Here is a 341-residue protein sequence, read N- to C-terminus: Aspartate--ammonia ligase (341 aa).

The protein belongs to the class-II aminoacyl-tRNA synthetase family. AsnA subfamily.

It localises to the cytoplasm. The catalysed reaction is L-aspartate + NH4(+) + ATP = L-asparagine + AMP + diphosphate + H(+). Its pathway is amino-acid biosynthesis; L-asparagine biosynthesis; L-asparagine from L-aspartate (ammonia route): step 1/1. The protein is Aspartate--ammonia ligase of Clostridium tetani (strain Massachusetts / E88).